The chain runs to 644 residues: Type III restriction-modification enzyme EcoP15I Mod subunit (644 aa).

The segment at 123-126 (DPPY) is binding of S-adenosyl methionine.

It belongs to the N(4)/N(6)-methyltransferase family. In terms of assembly, forms a homodimer capable of methylating the target sequence in the absence of Res. A heterotetramer with stoichiometry Res(2)Mod(2). A heterotrimer with stoichiometry Res(1)Mod(2).

The catalysed reaction is a 2'-deoxyadenosine in DNA + S-adenosyl-L-methionine = an N(6)-methyl-2'-deoxyadenosine in DNA + S-adenosyl-L-homocysteine + H(+). Functionally, a beta subtype methylase that binds the system-specific DNA recognition site 5'-CAGCAG-3' and methylates A-5 (of only 1 strand as the other does not have an A residue). DNA restriction requires both the Res and Mod subunits. The A-5 nucleotide flips into the catalytic pocket of one Mod subunit for modification, while the other Mod subunit makes most of the DNA sequence-specific contacts. The protein is Type III restriction-modification enzyme EcoP15I Mod subunit of Escherichia coli.